We begin with the raw amino-acid sequence, 152 residues long: Deoxyuridine 5'-triphosphate nucleotidohydrolase (152 aa).

Substrate contacts are provided by residues 71-73 (RSG), asparagine 84, 88-90 (LID), and methionine 98.

The protein belongs to the dUTPase family. Mg(2+) serves as cofactor.

The enzyme catalyses dUTP + H2O = dUMP + diphosphate + H(+). It functions in the pathway pyrimidine metabolism; dUMP biosynthesis; dUMP from dCTP (dUTP route): step 2/2. Its function is as follows. This enzyme is involved in nucleotide metabolism: it produces dUMP, the immediate precursor of thymidine nucleotides and it decreases the intracellular concentration of dUTP so that uracil cannot be incorporated into DNA. This Aeromonas salmonicida (strain A449) protein is Deoxyuridine 5'-triphosphate nucleotidohydrolase.